The chain runs to 212 residues: MIIAIDGPAASGKGTMAKRLAAHYGLRHLDTGVIYRAVAHALLTAGLDLKDEARAAEVAMTLDPSTFDNPAFRSHEVGSAASVVSALPKVREALLAFQRQFASQPPGAVLDGRDIGTVICPDAEVKIYVVADPKIRAHRRTLEARSRGEPADEAAILADILARDERDQNRAVAPLKQAADAYLLDNSHLDIESGVRAAIDIVEAVRAGRQRV.

Residue 7 to 15 (GPAASGKGT) coordinates ATP.

Belongs to the cytidylate kinase family. Type 1 subfamily.

It localises to the cytoplasm. The enzyme catalyses CMP + ATP = CDP + ADP. It catalyses the reaction dCMP + ATP = dCDP + ADP. This is Cytidylate kinase from Bradyrhizobium sp. (strain ORS 278).